The primary structure comprises 404 residues: Glucose-1-phosphate adenylyltransferase 2 (404 aa).

Residues Tyr-97, Gly-162, 177 to 178 (EK), and Ser-195 each bind alpha-D-glucose 1-phosphate.

Belongs to the bacterial/plant glucose-1-phosphate adenylyltransferase family. Homotetramer.

The catalysed reaction is alpha-D-glucose 1-phosphate + ATP + H(+) = ADP-alpha-D-glucose + diphosphate. Its pathway is glycan biosynthesis; glycogen biosynthesis. Its function is as follows. Involved in the biosynthesis of ADP-glucose, a building block required for the elongation reactions to produce glycogen. Catalyzes the reaction between ATP and alpha-D-glucose 1-phosphate (G1P) to produce pyrophosphate and ADP-Glc. This Vibrio vulnificus (strain YJ016) protein is Glucose-1-phosphate adenylyltransferase 2.